A 91-amino-acid polypeptide reads, in one-letter code: Large ribosomal subunit protein uL23c (91 aa).

This sequence belongs to the universal ribosomal protein uL23 family. As to quaternary structure, part of the 50S ribosomal subunit.

It is found in the plastid. The protein resides in the chloroplast. In terms of biological role, binds to 23S rRNA. In Huperzia lucidula (Shining clubmoss), this protein is Large ribosomal subunit protein uL23c (rpl23).